The following is a 107-amino-acid chain: Proteinase inhibitor I-B (107 aa).

Residues 1–22 form the signal peptide; sequence MVKFAHVVAFLLLASLFQPLTA. Positions 23-39 are excised as a propeptide; the sequence is RDLEINVLQLDVSQSGC.

This sequence belongs to the protease inhibitor I13 (potato type I serine protease inhibitor) family.

Its subcellular location is the secreted. This chain is Proteinase inhibitor I-B (TIMPA), found in Nicotiana tabacum (Common tobacco).